A 288-amino-acid chain; its full sequence is Alpha/beta hydrolase domain-containing protein 17B (288 aa).

Catalysis depends on charge relay system residues Ser-170, Asp-235, and His-264. Ser-282 carries the post-translational modification Phosphoserine.

The protein belongs to the AB hydrolase superfamily. ABHD17 family. Post-translationally, palmitoylated on cysteine residues located in a cysteine cluster at the N-terminus which promotes membrane localization. Palmitoylation is required for post-synaptic localization and for depalmitoylating activity towards DLG4/PSD95.

The protein resides in the cell membrane. It is found in the recycling endosome membrane. Its subcellular location is the cell projection. It localises to the dendritic spine. The protein localises to the postsynaptic density membrane. The enzyme catalyses S-hexadecanoyl-L-cysteinyl-[protein] + H2O = L-cysteinyl-[protein] + hexadecanoate + H(+). With respect to regulation, inhibited by palmostatin-B. Functionally, hydrolyzes fatty acids from S-acylated cysteine residues in proteins. Has depalmitoylating activity towards DLG4/PSD95. Has depalmitoylating activity towards GAP43. Has depalmitoylating activity towards MAP6. Has depalmitoylating activity towards NRAS. This is Alpha/beta hydrolase domain-containing protein 17B from Homo sapiens (Human).